The chain runs to 199 residues: NAD(P)H dehydrogenase (quinone) (199 aa).

Residues 4 to 190 (VLVLYYSTYG…AGARHQGELV (187 aa)) enclose the Flavodoxin-like domain. FMN contacts are provided by residues 10-15 (STYGHL) and 78-80 (TRF). Residue Tyr12 coordinates NAD(+). Trp98 contacts substrate. FMN-binding positions include 113 to 119 (STATQHG) and His134.

Belongs to the WrbA family. The cofactor is FMN.

The catalysed reaction is a quinone + NADH + H(+) = a quinol + NAD(+). It catalyses the reaction a quinone + NADPH + H(+) = a quinol + NADP(+). This Azorhizobium caulinodans (strain ATCC 43989 / DSM 5975 / JCM 20966 / LMG 6465 / NBRC 14845 / NCIMB 13405 / ORS 571) protein is NAD(P)H dehydrogenase (quinone).